The sequence spans 486 residues: FAD-dependent oxidoreductase domain-containing protein 1 (486 aa).

A helical membrane pass occupies residues 66-86; the sequence is VVVVGGGVLGLSVAYWLKQLE.

Associates with components of the mitochondrial respiratory chain complex I. FAD serves as cofactor.

Its subcellular location is the mitochondrion inner membrane. Its function is as follows. Required for the assembly of the mitochondrial membrane respiratory chain NADH dehydrogenase (Complex I). Involved in mid-late stages of complex I assembly. In Macaca fascicularis (Crab-eating macaque), this protein is FAD-dependent oxidoreductase domain-containing protein 1 (FOXRED1).